The chain runs to 392 residues: B2 bradykinin receptor (392 aa).

Residues 1-61 (MPCSWKLLGF…EWWSWLNAIQ (61 aa)) lie on the Extracellular side of the membrane. Asn-29 and Asn-40 each carry an N-linked (GlcNAc...) asparagine glycan. The helical transmembrane segment at 62–85 (APFLWVLFLLAALENLFVLSVFFL) threads the bilayer. The Cytoplasmic portion of the chain corresponds to 86–94 (HKNSCTVAE). The helical transmembrane segment at 95 to 119 (IYLGNLAAADLILACGLPFWAITIA) threads the bilayer. The Extracellular portion of the chain corresponds to 120–132 (NNFDWVFGEVLCR). A disulfide bridge connects residues Cys-131 and Cys-212. Residues 133–154 (VVNTMIYMNLYSSICFLMLVSI) traverse the membrane as a helical segment. The Cytoplasmic portion of the chain corresponds to 155 to 176 (DRYLALVKTMSMGRMRGVRWAK). A Phosphotyrosine modification is found at Tyr-157. Residues 177–199 (LYSLVIWGCTLLLSSPMLVFRTM) traverse the membrane as a helical segment. Residues 200-222 (REYSEEGHNVTACVIVYPSRSWE) are Extracellular-facing. Residue Asn-208 is glycosylated (N-linked (GlcNAc...) asparagine). A helical membrane pass occupies residues 223 to 249 (VFTNVLLNLVGFLLPLSVITFCTVRIL). Residues 250–268 (QVLRNNEMKKFKEVQTERK) are Cytoplasmic-facing. A helical transmembrane segment spans residues 269–293 (ATVLVLAVLGLFVLCWVPFQISTFL). At 294 to 312 (DTLLRLGVLSGCWDEHAVD) the chain is on the extracellular side. The chain crosses the membrane as a helical span at residues 313 to 336 (VITQISSYVAYSNSGLNPLVYVIV). Residues 337-392 (GKRFRKKSREVYRVLCQKGGCMGEPVQMENSMGTLRTSISVERQIHKLQDWAGKKQ) lie on the Cytoplasmic side of the membrane. Position 348 is a phosphotyrosine (Tyr-348). A lipid anchor (S-palmitoyl cysteine) is attached at Cys-352. At Ser-367 the chain carries Phosphoserine. The residue at position 370 (Thr-370) is a Phosphothreonine. 2 positions are modified to phosphoserine; by GRK6: Ser-374 and Ser-376.

It belongs to the G-protein coupled receptor 1 family. Bradykinin receptor subfamily. BDKRB2 sub-subfamily. As to quaternary structure, forms a complex with PECAM1 and GNAQ. Interacts with PECAM1.

The protein localises to the cell membrane. In terms of biological role, receptor for bradykinin. It is associated with G proteins that activate a phosphatidylinositol-calcium second messenger system. The protein is B2 bradykinin receptor (Bdkrb2) of Mus musculus (Mouse).